Consider the following 400-residue polypeptide: Golgin-45 (400 aa).

The tract at residues 1 to 36 (MEKMTTLKSFESKGILTSTPIRGAGDGMETEEPPKS) is disordered. Positions 22 to 26 (RGAGD) match the Tankyrase-binding motif motif. A Phosphoserine modification is found at Ser53. A coiled-coil region spans residues 126–263 (LSEVKKVLEK…LSEREQFRQE (138 aa)). A Phosphoserine modification is found at Ser356. The segment at 394-400 (QGELLAL) is essential for interaction with GORASP2.

In terms of assembly, interacts with GORASP2. Interacts with the GTP-bound form of RAB2, but not with other Golgi Rab proteins. Identified in a complex with RAB2 and GORASP2. ADP-ribosylated by tankyrase TNKS and TNKS2. Poly-ADP-ribosylated protein is recognized by RNF146, followed by ubiquitination. Post-translationally, ubiquitinated by RNF146 when poly-ADP-ribosylated, leading to its degradation.

The protein localises to the golgi apparatus membrane. Required for normal Golgi structure and for protein transport from the endoplasmic reticulum (ER) through the Golgi apparatus to the cell surface. The sequence is that of Golgin-45 from Rattus norvegicus (Rat).